A 169-amino-acid chain; its full sequence is Ribosome maturation factor RimM (169 aa).

Residues 97 to 169 (PGEYYWYQLI…VITVDWDMNF (73 aa)) form the PRC barrel domain.

The protein belongs to the RimM family. In terms of assembly, binds ribosomal protein uS19.

The protein localises to the cytoplasm. An accessory protein needed during the final step in the assembly of 30S ribosomal subunit, possibly for assembly of the head region. Essential for efficient processing of 16S rRNA. May be needed both before and after RbfA during the maturation of 16S rRNA. It has affinity for free ribosomal 30S subunits but not for 70S ribosomes. This chain is Ribosome maturation factor RimM, found in Legionella pneumophila subsp. pneumophila (strain Philadelphia 1 / ATCC 33152 / DSM 7513).